Reading from the N-terminus, the 174-residue chain is tRNA (cytidine(56)-2'-O)-methyltransferase (174 aa).

Residues Leu-83, 108-112 (GAEKV), and 126-133 (VGNQPHSE) each bind S-adenosyl-L-methionine.

Belongs to the aTrm56 family. As to quaternary structure, homodimer.

The protein resides in the cytoplasm. The catalysed reaction is cytidine(56) in tRNA + S-adenosyl-L-methionine = 2'-O-methylcytidine(56) in tRNA + S-adenosyl-L-homocysteine + H(+). Specifically catalyzes the AdoMet-dependent 2'-O-ribose methylation of cytidine at position 56 in tRNAs. The protein is tRNA (cytidine(56)-2'-O)-methyltransferase of Methanothrix thermoacetophila (strain DSM 6194 / JCM 14653 / NBRC 101360 / PT) (Methanosaeta thermophila).